The chain runs to 381 residues: Tafazzin (381 aa).

Residues 1 to 25 are Mitochondrial intermembrane-facing; the sequence is MSFRDVLERGDEFLEAYPRRSPLWR. The stretch at 26–47 is an intramembrane region; it reads FLSYSTSLLTFGVSKLLLFTCY. Topologically, residues 48-381 are mitochondrial intermembrane; sequence NVKLNGFEKL…PEGKPKGKDD (334 aa). The HXXXXD motif signature appears at 77 to 82; it reads HMSMVD. A required for membrane insertion region spans residues 215-232; it reads LEATKPPIVVPIFATGFE.

Belongs to the taffazin family.

Its subcellular location is the mitochondrion outer membrane. The protein localises to the mitochondrion inner membrane. It carries out the reaction 1'-[1,2-diacyl-sn-glycero-3-phospho],3'-[1-acyl-sn-glycero-3-phospho]-glycerol + a 1,2-diacyl-sn-glycero-3-phosphocholine = a cardiolipin + a 1-acyl-sn-glycero-3-phosphocholine. It catalyses the reaction 1,2-di-(9Z,12Z-octadecadienoyl)-sn-glycero-3-phosphocholine + 1'-[1,2-di-(9Z,12Z-octadecadienoyl)-sn-glycero-3-phospho]-3'-[1-(9Z,12Z-octadecadienoyl)-sn-glycero-3-phospho]-glycerol = 1-(9Z,12Z)-octadecadienoyl-sn-glycero-3-phosphocholine + 1',3'-bis-[1,2-di-(9Z,12Z-octadecadienoyl)-sn-glycero-3-phospho]-glycerol. The enzyme catalyses 1'-[1,2-di-(9Z-octadecenoyl)-sn-glycero-3-phospho]-3'-[1-(9Z-octadecenoyl)-2-hexadecanoyl-sn-glycero-3-phospho]-glycerol + 1-hexadecanoyl-sn-glycero-3-phosphocholine = 1'-[1,2-di-(9Z-octadecenoyl)-sn-glycero-3-phospho]-3'-[1-(9Z-octadecenoyl)-sn-glycero-3-phospho]-glycerol + 1,2-dihexadecanoyl-sn-glycero-3-phosphocholine. The catalysed reaction is 1'-[1,2-di-(9Z-octadecenoyl)-sn-glycero-3-phospho]-3'-[1-(9Z-octadecenoyl)-2-(9Z-hexadecenoyl)-sn-glycero-3-phospho]-glycerol + 1-(9Z-hexadecenoyl)-sn-glycero-3-phosphocholine = 1,2-di-(9Z-hexadecenoyl)-sn-glycero-3-phosphocholine + 1'-[1,2-di-(9Z-octadecenoyl)-sn-glycero-3-phospho]-3'-[1-(9Z-octadecenoyl)-sn-glycero-3-phospho]-glycerol. It carries out the reaction 1',3'-bis[1,2-di-(9Z-octadecenoyl)-sn-glycero-3-phospho]-glycerol + 1-(9Z-octadecenoyl)-sn-glycero-3-phosphocholine = 1'-[1,2-di-(9Z-octadecenoyl)-sn-glycero-3-phospho]-3'-[1-(9Z-octadecenoyl)-sn-glycero-3-phospho]-glycerol + 1,2-di-(9Z-octadecenoyl)-sn-glycero-3-phosphocholine. It catalyses the reaction 1'-[1,2-di-(9Z-octadecenoyl)-sn-glycero-3-phospho]-3'-[1-(9Z-octadecenoyl)-2-(9Z,12Z-octadecadienoyl)-sn-glycero-3-phospho]-glycerol + 1-(9Z,12Z)-octadecadienoyl-sn-glycero-3-phosphocholine = 1,2-di-(9Z,12Z-octadecadienoyl)-sn-glycero-3-phosphocholine + 1'-[1,2-di-(9Z-octadecenoyl)-sn-glycero-3-phospho]-3'-[1-(9Z-octadecenoyl)-sn-glycero-3-phospho]-glycerol. The enzyme catalyses 1'-[1,2-di-(9Z-octadecenoyl)-sn-glycero-3-phospho]-3'-[1-(9Z-octadecenoyl)-2-(9Z-hexadecenoyl)-sn-glycero-3-phospho]-glycerol + 1-hexadecanoyl-sn-glycero-3-phosphocholine = 1-hexadecanoyl-2-(9Z-hexadecenoyl)-sn-glycero-3-phosphocholine + 1'-[1,2-di-(9Z-octadecenoyl)-sn-glycero-3-phospho]-3'-[1-(9Z-octadecenoyl)-sn-glycero-3-phospho]-glycerol. The catalysed reaction is 1'-[1,2-di-(9Z-octadecenoyl)-sn-glycero-3-phospho]-3'-[1-(9Z-octadecenoyl)-2-hexadecanoyl-sn-glycero-3-phospho]-glycerol + 1-(9Z-hexadecenoyl)-sn-glycero-3-phosphocholine = 1-(9Z-hexadecenoyl)-2-hexadecanoyl-sn-glycero-3-phosphocholine + 1'-[1,2-di-(9Z-octadecenoyl)-sn-glycero-3-phospho]-3'-[1-(9Z-octadecenoyl)-sn-glycero-3-phospho]-glycerol. It carries out the reaction 2 1'-[1,2-diacyl-sn-glycero-3-phospho],3'-[1-acyl-sn-glycero-3-phospho]-glycerol = 1',3'-bis-[1-acyl-sn-glycero-3-phospho]-glycerol + a cardiolipin. It catalyses the reaction 2 1'-[1,2-di-(9Z-octadecenoyl)-sn-glycero-3-phospho]-3'-[1-(9Z-octadecenoyl)-sn-glycero-3-phospho]-glycerol = 1',3'-bis-[1-(9Z-octadecenoyl)-sn-glycero-3-phospho]-glycerol + 1',3'-bis[1,2-di-(9Z-octadecenoyl)-sn-glycero-3-phospho]-glycerol. The enzyme catalyses 1,2-di-(9Z-hexadecenoyl)-sn-glycero-3-phosphocholine + 1-hexadecanoyl-sn-glycero-3-phosphocholine = 1-hexadecanoyl-2-(9Z-hexadecenoyl)-sn-glycero-3-phosphocholine + 1-(9Z-hexadecenoyl)-sn-glycero-3-phosphocholine. The catalysed reaction is 1'-[1,2-di-(9Z,12Z-octadecadienoyl)-sn-glycero-3-phospho]-3'-[1-(9Z,12Z-octadecadienoyl)-sn-glycero-3-phospho]-glycerol + 1,2-di-(9Z-octadecenoyl)-sn-glycero-3-phosphocholine = 1'-[1,2-di-(9Z,12Z-octadecadienoyl)-sn-glycero-3-phospho]-3'-[1-(9Z,12Z-octadecadienoyl)-2-(9Z-octadecenoyl)-sn-glycero-3-phospho]-glycerol + 1-(9Z-octadecenoyl)-sn-glycero-3-phosphocholine. Its pathway is phospholipid metabolism. In terms of biological role, acyltransferase required to remodel newly synthesized phospholipid cardiolipin (1',3'-bis-[1,2-diacyl-sn-glycero-3-phospho]-glycerol or CL), a key component of the mitochondrial inner membrane, with tissue specific acyl chains necessary for adequate mitochondrial function. Its role in cellular physiology is to improve mitochondrial performance. CL is critical for the coassembly of lipids and proteins in mitochondrial membranes, for instance, remodeling of the acyl groups of CL in the mitochondrial inner membrane affects the assembly and stability of respiratory chain complex IV and its supercomplex forms. Catalyzes the transacylation between phospholipids and lysophospholipids, with the highest rate being between phosphatidylcholine (1,2-diacyl-sn-glycero-3-phosphocholine or PC) and CL. Catalyzes both 1-acyl-sn-glycero-3-phosphocholine (lysophosphatidylcholine or LPC) reacylation and PC-CL transacylation, that means, it exchanges acyl groups between CL and PC by a combination of forward and reverse transacylations. Also catalyzes transacylations between other phospholipids such as phosphatidylethanolamine (1,2-diacyl-sn-glycero-3-phosphoethanolamine or PE) and CL, between PC and PE, and between PC and phosphatidate (1,2-diacyl-sn-glycero-3-phosphate or PA), although at lower rate. Not regiospecific, it transfers acyl groups into any of the sn-1 and sn-2 positions of the monolysocardiolipin (MLCL), which is an important prerequisite for uniformity and symmetry in CL acyl distribution. Cannot transacylate dilysocardiolipin (DLCL), thus, the role of MLCL is limited to that of an acyl acceptor. CoA-independent, it can reshuffle molecular species within a single phospholipid class. Redistributes fatty acids between MLCL, CL, and other lipids, which prolongs the half-life of CL. Its action is completely reversible, which allows for cyclic changes, such as fission and fusion or bending and flattening of the membrane. Hence, by contributing to the flexibility of the lipid composition, it plays an important role in the dynamics of mitochondria membranes. Essential for the final stage of spermatogenesis, spermatid individualization. Required for the initiation of mitophagy. In Saccharomyces cerevisiae (strain ATCC 204508 / S288c) (Baker's yeast), this protein is Tafazzin (TAZ1).